Consider the following 204-residue polypeptide: U1 small nuclear ribonucleoprotein C (204 aa).

The Matrin-type zinc-finger motif lies at 4–36; sequence FFCDYCDVYLTHDSMSVRKAHNSGRNHLRNVVD. The disordered stretch occupies residues 65–204; it reads ANPMLPQNQP…GAGAPGHEKR (140 aa). Pro residues-rich tracts occupy residues 77–154 and 166–192; these read GFPP…PGAP and APPPFPGLPGMPPPGQGFPPGGPPGFA.

Belongs to the U1 small nuclear ribonucleoprotein C family. In terms of assembly, U1 snRNP is composed of the 7 core Sm proteins B/B', D1, D2, D3, E, F and G that assemble in a heptameric protein ring on the Sm site of the small nuclear RNA to form the core snRNP, and at least 3 U1 snRNP-specific proteins U1-70K, U1-A and U1-C. U1-C interacts with U1 snRNA and the 5' splice-site region of the pre-mRNA.

The protein resides in the nucleus. In terms of biological role, component of the spliceosomal U1 snRNP, which is essential for recognition of the pre-mRNA 5' splice-site and the subsequent assembly of the spliceosome. U1-C is directly involved in initial 5' splice-site recognition for both constitutive and regulated alternative splicing. The interaction with the 5' splice-site seems to precede base-pairing between the pre-mRNA and the U1 snRNA. Stimulates commitment or early (E) complex formation by stabilizing the base pairing of the 5' end of the U1 snRNA and the 5' splice-site region. In Fusarium vanettenii (strain ATCC MYA-4622 / CBS 123669 / FGSC 9596 / NRRL 45880 / 77-13-4) (Fusarium solani subsp. pisi), this protein is U1 small nuclear ribonucleoprotein C.